Consider the following 425-residue polypeptide: Glutamate-1-semialdehyde 2,1-aminomutase (425 aa).

K265 is modified (N6-(pyridoxal phosphate)lysine).

Belongs to the class-III pyridoxal-phosphate-dependent aminotransferase family. HemL subfamily. In terms of assembly, homodimer. The cofactor is pyridoxal 5'-phosphate.

It is found in the cytoplasm. It catalyses the reaction (S)-4-amino-5-oxopentanoate = 5-aminolevulinate. It functions in the pathway porphyrin-containing compound metabolism; protoporphyrin-IX biosynthesis; 5-aminolevulinate from L-glutamyl-tRNA(Glu): step 2/2. The sequence is that of Glutamate-1-semialdehyde 2,1-aminomutase from Thiobacillus denitrificans (strain ATCC 25259 / T1).